The chain runs to 704 residues: Polyribonucleotide nucleotidyltransferase (704 aa).

The Mg(2+) site is built by aspartate 488 and aspartate 494. The 60-residue stretch at 555–614 (PRITTLKINPEKIRDVIGKGGATIRALTEETGTTIELEDDGTVKIASANGDATKEAIRRI) folds into the KH domain. The 69-residue stretch at 624–692 (GTIYNGKVVR…RQGRVRLSMK (69 aa)) folds into the S1 motif domain.

Belongs to the polyribonucleotide nucleotidyltransferase family. As to quaternary structure, component of the RNA degradosome, which is a multiprotein complex involved in RNA processing and mRNA degradation. Mg(2+) serves as cofactor.

The protein localises to the cytoplasm. The enzyme catalyses RNA(n+1) + phosphate = RNA(n) + a ribonucleoside 5'-diphosphate. In terms of biological role, involved in mRNA degradation. Catalyzes the phosphorolysis of single-stranded polyribonucleotides processively in the 3'- to 5'-direction. This is Polyribonucleotide nucleotidyltransferase from Shewanella sediminis (strain HAW-EB3).